Reading from the N-terminus, the 113-residue chain is Retrotransposon Gag-like protein 8 (113 aa).

The protein belongs to the FAM127 family.

This Bos taurus (Bovine) protein is Retrotransposon Gag-like protein 8 (RTL8A).